The sequence spans 487 residues: Aspartyl/glutamyl-tRNA(Asn/Gln) amidotransferase subunit B (487 aa).

Belongs to the GatB/GatE family. GatB subfamily. In terms of assembly, heterotrimer of A, B and C subunits.

The enzyme catalyses L-glutamyl-tRNA(Gln) + L-glutamine + ATP + H2O = L-glutaminyl-tRNA(Gln) + L-glutamate + ADP + phosphate + H(+). The catalysed reaction is L-aspartyl-tRNA(Asn) + L-glutamine + ATP + H2O = L-asparaginyl-tRNA(Asn) + L-glutamate + ADP + phosphate + 2 H(+). Its function is as follows. Allows the formation of correctly charged Asn-tRNA(Asn) or Gln-tRNA(Gln) through the transamidation of misacylated Asp-tRNA(Asn) or Glu-tRNA(Gln) in organisms which lack either or both of asparaginyl-tRNA or glutaminyl-tRNA synthetases. The reaction takes place in the presence of glutamine and ATP through an activated phospho-Asp-tRNA(Asn) or phospho-Glu-tRNA(Gln). The sequence is that of Aspartyl/glutamyl-tRNA(Asn/Gln) amidotransferase subunit B from Acidiphilium cryptum (strain JF-5).